The sequence spans 315 residues: Aspartate carbamoyltransferase catalytic subunit (315 aa).

2 residues coordinate carbamoyl phosphate: arginine 55 and threonine 56. Lysine 83 is a binding site for L-aspartate. 3 residues coordinate carbamoyl phosphate: arginine 105, histidine 138, and glutamine 141. Positions 171 and 225 each coordinate L-aspartate. Carbamoyl phosphate-binding residues include glycine 266 and proline 267.

The protein belongs to the aspartate/ornithine carbamoyltransferase superfamily. ATCase family. Heterododecamer (2C3:3R2) of six catalytic PyrB chains organized as two trimers (C3), and six regulatory PyrI chains organized as three dimers (R2).

It carries out the reaction carbamoyl phosphate + L-aspartate = N-carbamoyl-L-aspartate + phosphate + H(+). It participates in pyrimidine metabolism; UMP biosynthesis via de novo pathway; (S)-dihydroorotate from bicarbonate: step 2/3. Functionally, catalyzes the condensation of carbamoyl phosphate and aspartate to form carbamoyl aspartate and inorganic phosphate, the committed step in the de novo pyrimidine nucleotide biosynthesis pathway. This is Aspartate carbamoyltransferase catalytic subunit from Mycolicibacterium gilvum (strain PYR-GCK) (Mycobacterium gilvum (strain PYR-GCK)).